A 488-amino-acid chain; its full sequence is GTPase Der (488 aa).

EngA-type G domains lie at 3-166 (PVVA…AEAM) and 199-372 (IKLA…DSAT). GTP contacts are provided by residues 9–16 (GRPNVGKS), 56–60 (DTGGI), 118–121 (NKID), 205–212 (GKPNVGKS), 252–256 (DTAGV), and 317–320 (NKWD). One can recognise a KH-like domain in the interval 373-457 (RRVSTSMLTR…PIQLRFQEGD (85 aa)).

Belongs to the TRAFAC class TrmE-Era-EngA-EngB-Septin-like GTPase superfamily. EngA (Der) GTPase family. As to quaternary structure, associates with the 50S ribosomal subunit.

Its function is as follows. GTPase that plays an essential role in the late steps of ribosome biogenesis. The chain is GTPase Der from Shewanella sp. (strain ANA-3).